A 393-amino-acid polypeptide reads, in one-letter code: Bifunctional enzyme Fae/Hps (393 aa).

The formaldehyde-activating enzyme stretch occupies residues Met-1 to Val-161. His-17 serves as the catalytic Proton donor. Residues Asp-19, Leu-48, Lys-66, Thr-68, and Gln-83 each coordinate substrate. Residues Met-162–Phe-393 form a 3-hexulose-6-phosphate synthase region.

The protein in the N-terminal section; belongs to the formaldehyde-activating enzyme family. In the C-terminal section; belongs to the HPS/KGPDC family. HPS subfamily.

The enzyme catalyses 5,6,7,8-tetrahydromethanopterin + formaldehyde = 5,10-methylenetetrahydromethanopterin + H2O. It carries out the reaction D-ribulose 5-phosphate + formaldehyde = D-arabino-hex-3-ulose 6-phosphate. It participates in carbohydrate biosynthesis; D-ribose 5-phosphate biosynthesis. Functionally, catalyzes the condensation of formaldehyde with tetrahydromethanopterin (H(4)MPT) to 5,10-methylenetetrahydromethanopterin. Its function is as follows. Catalyzes the reversible formation of ribulose-5-phosphate and formaldehyde from 3-hexulose-6-phosphate. This is Bifunctional enzyme Fae/Hps from Methanosphaerula palustris (strain ATCC BAA-1556 / DSM 19958 / E1-9c).